The following is a 531-amino-acid chain: Transcription termination/antitermination protein NusA (531 aa).

The S1 motif domain maps to 165 to 235 (GEVIEAKVED…SLWPITLSRS (71 aa)). The region spanning 340 to 410 (DTSIEVVVPA…FGIKKRREKI (71 aa)) is the KH domain. Residues 463-475 (EKQVTPKEKEKVQ) are compositionally biased toward basic and acidic residues. The disordered stretch occupies residues 463–531 (EKQVTPKEKE…KQTFDSFDDL (69 aa)). The span at 476–490 (PKAKVHSNSHSKKPA) shows a compositional bias: basic residues. Residues 502 to 512 (ASDKNLKKDQV) show a composition bias toward basic and acidic residues. Residues 513–531 (DNNQTNPQTKQTFDSFDDL) are compositionally biased toward polar residues.

Belongs to the NusA family. As to quaternary structure, monomer. Binds directly to the core enzyme of the DNA-dependent RNA polymerase and to nascent RNA.

The protein resides in the cytoplasm. Its function is as follows. Participates in both transcription termination and antitermination. In Mycoplasma genitalium (strain ATCC 33530 / DSM 19775 / NCTC 10195 / G37) (Mycoplasmoides genitalium), this protein is Transcription termination/antitermination protein NusA.